A 103-amino-acid chain; its full sequence is Truncated secreted TNF-receptor-like protein A53 (103 aa).

The TNFR-Cys 1 repeat unit spans residues serine 36–glutamate 73. Disulfide bonds link cysteine 37–cysteine 50, cysteine 51–cysteine 64, and cysteine 54–cysteine 72. The TNFR-Cys 2; truncated repeat unit spans residues arginine 74–arginine 103.

Belongs to the poxviridae A53R protein family.

This chain is Truncated secreted TNF-receptor-like protein A53, found in Vaccinia virus (strain Copenhagen) (VACV).